The chain runs to 409 residues: MRVLLSTAGSRGDVEPLVALAVRLQGLGVEARMCASPASAERLAEVGVPHVPVGLQLEGMLLQEGMPPPSPEEERRLAAKAIDMQFDEVPAAAEGCAAVVAAGELAAAAAVRSVAEMLGIPYFYAAYSPNYLPSPHHAPPEDERTTPGVTDNKVLWDERGQRFAKRYGDTLNSRRASVGLPPVEDVFGYGYSERPWLATDPILAPLPPDFDAVQTGTWILPDERPLSAELEAFLAAGSPPVYLGFGSASGPGIDDAARVAIEAIRAHGRRIVLLSGWADLVRPDDGADCFSVDEVNLQVLFSRAAAAIHHGSAGTEHLATLAGIPQIVIPRHTDQPYYAERVADLGIGVALEGPVPTFDAMSAAVATALAPETRARATAVAGTIRTDGAAVAARLLLDAVSREKSAVLA.

The protein belongs to the glycosyltransferase 28 family.

It catalyses the reaction dTDP-beta-L-vancosamine + devancoaminyl-vancomycin = epivancomycin + dTDP + H(+). The catalysed reaction is chloroorienticin B + dTDP-beta-L-vancosamine = chloroeremomycin + dTDP + H(+). The protein operates within antibiotic biosynthesis; vancomycin biosynthesis. Its function is as follows. Catalyzes the attachment of dTDP-L-4-epi-vancosamine to chloroorienticin B to form chloroeremomycin in the biosynthesis of glycopeptide antibiotic chloroeremomycin, a member of the vancomycin group of antibiotics. Also able to use dTDP-L-4-epi-vancosamine and devancoaminyl-vancomycin (DVV) to create epivancomycin. Acts downstream of GtfA. In Amycolatopsis orientalis (Nocardia orientalis), this protein is Glycosyltransferase GtfC (gtfC).